The sequence spans 412 residues: Serine hydroxymethyltransferase (412 aa).

(6S)-5,6,7,8-tetrahydrofolate contacts are provided by residues leucine 117 and 121–123; that span reads GHL. Residue lysine 226 is modified to N6-(pyridoxal phosphate)lysine. (6S)-5,6,7,8-tetrahydrofolate is bound by residues glutamate 242 and 350-352; that span reads SPF.

It belongs to the SHMT family. In terms of assembly, homodimer. It depends on pyridoxal 5'-phosphate as a cofactor.

The protein resides in the cytoplasm. It carries out the reaction (6R)-5,10-methylene-5,6,7,8-tetrahydrofolate + glycine + H2O = (6S)-5,6,7,8-tetrahydrofolate + L-serine. It participates in one-carbon metabolism; tetrahydrofolate interconversion. Its pathway is amino-acid biosynthesis; glycine biosynthesis; glycine from L-serine: step 1/1. In terms of biological role, catalyzes the reversible interconversion of serine and glycine with tetrahydrofolate (THF) serving as the one-carbon carrier. Also exhibits THF-independent aldolase activity toward beta-hydroxyamino acids, producing glycine and aldehydes, via a retro-aldol mechanism. This Methanosarcina acetivorans (strain ATCC 35395 / DSM 2834 / JCM 12185 / C2A) protein is Serine hydroxymethyltransferase.